We begin with the raw amino-acid sequence, 169 residues long: Crossover junction endodeoxyribonuclease RuvC (169 aa).

Catalysis depends on residues Asp13, Glu73, and Asp145. Residues Asp13, Glu73, and Asp145 each coordinate Mg(2+).

This sequence belongs to the RuvC family. In terms of assembly, homodimer which binds Holliday junction (HJ) DNA. The HJ becomes 2-fold symmetrical on binding to RuvC with unstacked arms; it has a different conformation from HJ DNA in complex with RuvA. In the full resolvosome a probable DNA-RuvA(4)-RuvB(12)-RuvC(2) complex forms which resolves the HJ. Requires Mg(2+) as cofactor.

The protein localises to the cytoplasm. The catalysed reaction is Endonucleolytic cleavage at a junction such as a reciprocal single-stranded crossover between two homologous DNA duplexes (Holliday junction).. Its function is as follows. The RuvA-RuvB-RuvC complex processes Holliday junction (HJ) DNA during genetic recombination and DNA repair. Endonuclease that resolves HJ intermediates. Cleaves cruciform DNA by making single-stranded nicks across the HJ at symmetrical positions within the homologous arms, yielding a 5'-phosphate and a 3'-hydroxyl group; requires a central core of homology in the junction. The consensus cleavage sequence is 5'-(A/T)TT(C/G)-3'. Cleavage occurs on the 3'-side of the TT dinucleotide at the point of strand exchange. HJ branch migration catalyzed by RuvA-RuvB allows RuvC to scan DNA until it finds its consensus sequence, where it cleaves and resolves the cruciform DNA. This is Crossover junction endodeoxyribonuclease RuvC from Solidesulfovibrio magneticus (strain ATCC 700980 / DSM 13731 / RS-1) (Desulfovibrio magneticus).